A 227-amino-acid polypeptide reads, in one-letter code: Charged multivesicular body protein 4b (227 aa).

2 disordered regions span residues 1–26 and 186–227; these read MSGI…SPQE and SGPE…AGNM. Residues 9–20 are compositionally biased toward gly residues; that stretch reads FGAGAGGKGAGK. Residues 25-185 are a coiled coil; that stretch reads QEAIQRLRDT…EELDKNLLEI (161 aa).

Belongs to the SNF7 family. Probable core component of the endosomal sorting required for transport complex III (ESCRT-III). ESCRT-III components are thought to multimerize to form a flat lattice on the perimeter membrane of the endosome.

The protein resides in the cytoplasm. The protein localises to the cytosol. It is found in the late endosome membrane. Its subcellular location is the midbody. Probable core component of the endosomal sorting required for transport complex III (ESCRT-III) which is involved in multivesicular bodies (MVBs) formation and sorting of endosomal cargo proteins into MVBs. MVBs contain intraluminal vesicles (ILVs) that are generated by invagination and scission from the limiting membrane of the endosome and mostly are delivered to lysosomes enabling degradation of membrane proteins, such as stimulated growth factor receptors, lysosomal enzymes and lipids. The polypeptide is Charged multivesicular body protein 4b (CHMP4B) (Gallus gallus (Chicken)).